We begin with the raw amino-acid sequence, 147 residues long: Lysozyme C-3 (147 aa).

Residues methionine 1–glycine 18 form the signal peptide. Residues lysine 19 to leucine 147 form the C-type lysozyme domain. 4 disulfides stabilise this stretch: cysteine 24–cysteine 145, cysteine 48–cysteine 133, cysteine 83–cysteine 99, and cysteine 95–cysteine 113. Catalysis depends on residues glutamate 53 and aspartate 71.

It belongs to the glycosyl hydrolase 22 family. In terms of assembly, monomer. In terms of tissue distribution, stomach-specific.

It catalyses the reaction Hydrolysis of (1-&gt;4)-beta-linkages between N-acetylmuramic acid and N-acetyl-D-glucosamine residues in a peptidoglycan and between N-acetyl-D-glucosamine residues in chitodextrins.. Lysozymes have primarily a bacteriolytic function; those in tissues and body fluids are associated with the monocyte-macrophage system and enhance the activity of immunoagents. The sequence is that of Lysozyme C-3 (LYZ3) from Bos taurus (Bovine).